The sequence spans 128 residues: Large ribosomal subunit protein bL12 (128 aa).

Belongs to the bacterial ribosomal protein bL12 family. Homodimer. Part of the ribosomal stalk of the 50S ribosomal subunit. Forms a multimeric L10(L12)X complex, where L10 forms an elongated spine to which 2 to 4 L12 dimers bind in a sequential fashion. Binds GTP-bound translation factors.

Functionally, forms part of the ribosomal stalk which helps the ribosome interact with GTP-bound translation factors. Is thus essential for accurate translation. The polypeptide is Large ribosomal subunit protein bL12 (Brachyspira hyodysenteriae (strain ATCC 49526 / WA1)).